The sequence spans 335 residues: Probable nicotianamine synthase 2 (335 aa).

This sequence belongs to the nicotianamine synthase (NAS)-like family.

The catalysed reaction is 3 S-adenosyl-L-methionine = nicotianamine + 3 S-methyl-5'-thioadenosine + 3 H(+). Synthesizes nicotianamine, a polyamine that is the first intermediate in the synthesis of the phytosiderophores of the mugineic acid type found in gramineae which serves as a sensor for the physiological iron status within the plant, and/or might be involved in the transport of iron. The chain is Probable nicotianamine synthase 2 (NAS2) from Hordeum vulgare (Barley).